A 195-amino-acid chain; its full sequence is Imidazoleglycerol-phosphate dehydratase (195 aa).

This sequence belongs to the imidazoleglycerol-phosphate dehydratase family.

Its subcellular location is the cytoplasm. The enzyme catalyses D-erythro-1-(imidazol-4-yl)glycerol 3-phosphate = 3-(imidazol-4-yl)-2-oxopropyl phosphate + H2O. The protein operates within amino-acid biosynthesis; L-histidine biosynthesis; L-histidine from 5-phospho-alpha-D-ribose 1-diphosphate: step 6/9. The polypeptide is Imidazoleglycerol-phosphate dehydratase (Hydrogenovibrio crunogenus (strain DSM 25203 / XCL-2) (Thiomicrospira crunogena)).